Reading from the N-terminus, the 342-residue chain is MGCNSSSEAKQSDKIDRTLYDEKKSQEREIKLLLLGSGDSGKSTIAKQMRYIHTKGFSNEEIATFVEIMHSNVLSSIQILIRNVPVEQLGSDLKDKANYYSSINPYELPLTPDIGLEIDRLWKNEAIQKLFSTNRAELNLPEVTAYCLDQVERISSETYTPTQEDVLRCRQRTTGMKETQFNVEDIKFRLIDVGGQKNERRKWMHYFEDVKSIIFCVALGDYDMNLVEDETINRMEDSLKLWNDIVNNPFFKNTSFVLFLNKNDIFREKIKKIPLVDYFPDYQGGYNYEKGIEYIRNKFFSSVPTATTIVAHVTTATDTENITIVFDAVRRNIIQSILKLHY.

The N-myristoyl glycine moiety is linked to residue glycine 2. Cysteine 3 carries the S-palmitoyl cysteine lipid modification. In terms of domain architecture, G-alpha spans 28–342 (REIKLLLLGS…IIQSILKLHY (315 aa)). The segment at 31 to 44 (KLLLLGSGDSGKST) is G1 motif. GTP is bound by residues 36–43 (GSGDSGKS), 167–173 (LRCRQRT), 192–196 (DVGGQ), 261–264 (NKND), and alanine 316. Serine 43 and threonine 173 together coordinate Mg(2+). The segment at 165-173 (DVLRCRQRT) is G2 motif. The tract at residues 188-197 (FRLIDVGGQK) is G3 motif. Residues 257 to 264 (VLFLNKND) are G4 motif. The tract at residues 314–319 (TTATDT) is G5 motif.

It belongs to the G-alpha family. In terms of assembly, g proteins are composed of 3 units; alpha, beta and gamma. The alpha chain contains the guanine nucleotide binding site.

Its function is as follows. Guanine nucleotide-binding proteins (G proteins) are involved as modulators or transducers in various transmembrane signaling systems. G alpha-9 antagonizes broad chemotactic response. It functions rapidly following receptor stimulation to negatively regulate PI3K/PTEN, adenylyl cyclase, and guanylyl cyclase pathways. This chain is Guanine nucleotide-binding protein alpha-9 subunit (gpaI), found in Dictyostelium discoideum (Social amoeba).